The chain runs to 271 residues: Orotidine 5'-phosphate decarboxylase (271 aa).

Lys-95 serves as the catalytic Proton donor.

This sequence belongs to the OMP decarboxylase family. Type 2 subfamily.

The enzyme catalyses orotidine 5'-phosphate + H(+) = UMP + CO2. Its pathway is pyrimidine metabolism; UMP biosynthesis via de novo pathway; UMP from orotate: step 2/2. This Ralstonia pickettii (strain 12J) protein is Orotidine 5'-phosphate decarboxylase.